A 495-amino-acid chain; its full sequence is UDP-glycosyltransferase 73C9 (495 aa).

23-26 (GHMI) is a UDP-alpha-D-glucose binding site. His24 serves as the catalytic Proton acceptor. The active-site Charge relay is the Asp129. UDP-alpha-D-glucose-binding positions include 355–358 (WSPQ), 373–381 (HCGWNSTLE), and 397–398 (DQ).

Belongs to the UDP-glycosyltransferase family.

In terms of biological role, possesses very weak glucosyltransferase activity toward 2,4,5-trichlorophenol (TCP), when assayed with high concentrations of TCP. The sequence is that of UDP-glycosyltransferase 73C9 from Barbarea vulgaris (Yellow rocket).